The following is a 451-amino-acid chain: UPF0210 protein NMA1908 (451 aa).

The protein belongs to the UPF0210 family. As to quaternary structure, homodimer.

The chain is UPF0210 protein NMA1908 from Neisseria meningitidis serogroup A / serotype 4A (strain DSM 15465 / Z2491).